We begin with the raw amino-acid sequence, 261 residues long: UPF0177 protein YvdC (261 aa).

6 consecutive transmembrane segments (helical) span residues 15–35 (WVIV…IFHL), 43–63 (VLSI…VLFI), 84–104 (LDTV…YLIA), 123–143 (IIIG…FAQI), 197–217 (YFAF…TDLY), and 239–259 (FYLN…IALV).

The protein belongs to the UPF0177 family.

It localises to the cell membrane. In Lactococcus lactis subsp. lactis (strain IL1403) (Streptococcus lactis), this protein is UPF0177 protein YvdC (yvdC).